A 448-amino-acid polypeptide reads, in one-letter code: MLTSETQNVWTQFLQFVKTRCSPAAFGNWLAPIRVIDCSTEEVTLEIPNIFVQEYLLSNYKKDLCAFLPVDMSGEPAIRFIIAPPQKKIIPPNHFSISSSQKEEQSPNSDVKLNNNYRFENFIEGPTNQFVKSAAMGVALRPGQSYNPLFIHGGVGLGKTHILHSIGHYIKENHKKLRVQCITTEAFINDLVDSLRNKSVDRMKKFYRSEIDVLLVDDIQFLQNRLNFEEELSYTFEALKNKGAQIVITSDKPPSLLKLSERTIGKMEGGLVAHMGIPELETRVAILQYKAEQKGLHIPHKVAFFIAEHIHNNVRQLEGAINRLSAHCRLLDLNITEELVSRTLREMLQQAPREKISVEQILKSVAAVFQVRVSDLRGSTRTKDIALPRQVAMYLAKEMINESLIMLGASFGKTHSTILHACKNIEKKVASDETLRRQIGMVRRNIES.

Residues 1–76 are domain I, interacts with DnaA modulators; sequence MLTSETQNVW…FLPVDMSGEP (76 aa). The interval 76-111 is domain II; sequence PAIRFIIAPPQKKIIPPNHFSISSSQKEEQSPNSDV. Residues 112–328 form a domain III, AAA+ region region; that stretch reads KLNNNYRFEN…GAINRLSAHC (217 aa). G156, G158, K159, and T160 together coordinate ATP. The segment at 329–448 is domain IV, binds dsDNA; that stretch reads RLLDLNITEE…IGMVRRNIES (120 aa).

The protein belongs to the DnaA family. Oligomerizes as a right-handed, spiral filament on DNA at oriC.

The protein resides in the cytoplasm. Its function is as follows. Plays an essential role in the initiation and regulation of chromosomal replication. ATP-DnaA binds to the origin of replication (oriC) to initiate formation of the DNA replication initiation complex once per cell cycle. Binds the DnaA box (a 9 base pair repeat at the origin) and separates the double-stranded (ds)DNA. Forms a right-handed helical filament on oriC DNA; dsDNA binds to the exterior of the filament while single-stranded (ss)DNA is stabiized in the filament's interior. The ATP-DnaA-oriC complex binds and stabilizes one strand of the AT-rich DNA unwinding element (DUE), permitting loading of DNA polymerase. After initiation quickly degrades to an ADP-DnaA complex that is not apt for DNA replication. Binds acidic phospholipids. The chain is Chromosomal replication initiator protein DnaA 1 from Protochlamydia amoebophila (strain UWE25).